A 376-amino-acid polypeptide reads, in one-letter code: Chaperone protein DnaJ (376 aa).

One can recognise a J domain in the interval 5-70; that stretch reads DYYEVLGVGR…DKKAAYDQFG (66 aa). The CR-type zinc finger occupies 132 to 210; that stretch reads GLTKELRIPT…CHGDGRVEKS (79 aa). Positions 145, 148, 162, 165, 184, 187, 198, and 201 each coordinate Zn(2+). CXXCXGXG motif repeat units lie at residues 145–152, 162–169, 184–191, and 198–205; these read CDLCDGSG, CTTCHGQG, CPTCHGRG, and CSKCHGDG.

Belongs to the DnaJ family. As to quaternary structure, homodimer. The cofactor is Zn(2+).

Its subcellular location is the cytoplasm. Its function is as follows. Participates actively in the response to hyperosmotic and heat shock by preventing the aggregation of stress-denatured proteins and by disaggregating proteins, also in an autonomous, DnaK-independent fashion. Unfolded proteins bind initially to DnaJ; upon interaction with the DnaJ-bound protein, DnaK hydrolyzes its bound ATP, resulting in the formation of a stable complex. GrpE releases ADP from DnaK; ATP binding to DnaK triggers the release of the substrate protein, thus completing the reaction cycle. Several rounds of ATP-dependent interactions between DnaJ, DnaK and GrpE are required for fully efficient folding. Also involved, together with DnaK and GrpE, in the DNA replication of plasmids through activation of initiation proteins. This Shewanella sp. (strain W3-18-1) protein is Chaperone protein DnaJ.